Consider the following 236-residue polypeptide: Small ribosomal subunit protein uS5 (236 aa).

Residues 1–10 show a composition bias toward basic and acidic residues; it reads MTENNEKDIQ. A disordered region spans residues 1 to 64; that stretch reads MTENNEKDIQ…GRDGGREAEK (64 aa). Over residues 11–27 the composition is skewed to low complexity; that stretch reads VTEAVAAPATETAAPAT. Over residues 28–64 the composition is skewed to basic and acidic residues; that stretch reads TDDRRGGARRGERGDRGQGRGDRGGRGGRDGGREAEK. One can recognise an S5 DRBM domain in the interval 67 to 130; the sequence is FVERVVTINR…EEAKKSFFRV (64 aa).

The protein belongs to the universal ribosomal protein uS5 family. As to quaternary structure, part of the 30S ribosomal subunit. Contacts proteins S4 and S8.

In terms of biological role, with S4 and S12 plays an important role in translational accuracy. Its function is as follows. Located at the back of the 30S subunit body where it stabilizes the conformation of the head with respect to the body. This chain is Small ribosomal subunit protein uS5, found in Arthrobacter sp. (strain FB24).